A 297-amino-acid polypeptide reads, in one-letter code: HTH-type transcriptional regulator ArgP (297 aa).

In terms of domain architecture, HTH lysR-type spans 4–60 (PDYRTLQALDAVIRERGFERAAQKLCITQSAVSQRIKQLENMFGQPLLVRTVPPRPT). Residues 21 to 40 (FERAAQKLCITQSAVSQRIK) constitute a DNA-binding region (H-T-H motif).

It belongs to the LysR transcriptional regulatory family. In terms of assembly, homodimer.

Controls the transcription of genes involved in arginine and lysine metabolism. The chain is HTH-type transcriptional regulator ArgP from Salmonella choleraesuis (strain SC-B67).